The following is a 132-amino-acid chain: MSMTDPIADLLVRIKNAAAVGKQTVKAPSSKIKVAIAQVLKDEGYITDLRVTALENNKSELEIVLKYFEGKPVIATLKRFSRSGLRQYRGKSELPKVMNGLGISIISTSKGIMTDAQARQLGVGGEVLCFVA.

This sequence belongs to the universal ribosomal protein uS8 family. Part of the 30S ribosomal subunit. Contacts proteins S5 and S12.

Functionally, one of the primary rRNA binding proteins, it binds directly to 16S rRNA central domain where it helps coordinate assembly of the platform of the 30S subunit. The protein is Small ribosomal subunit protein uS8 of Stenotrophomonas maltophilia (strain R551-3).